The sequence spans 466 residues: DNA polymerase delta subunit 3 (466 aa).

A2 carries the N-acetylalanine modification. Disordered stretches follow at residues 169 to 188 and 199 to 232; these read NNEL…VSQQ and KAAA…PGKG. The span at 206-217 shows a compositional bias: basic and acidic residues; sequence ETNKETKTEAKE. Residue K258 forms a Glycyl lysine isopeptide (Lys-Gly) (interchain with G-Cter in SUMO); alternate linkage. K258 participates in a covalent cross-link: Glycyl lysine isopeptide (Lys-Gly) (interchain with G-Cter in SUMO2); alternate. A Glycyl lysine isopeptide (Lys-Gly) (interchain with G-Cter in SUMO2) cross-link involves residue K261. Disordered regions lie at residues 274–393 and 406–466; these read KLAT…KTYL and ESES…FQRK. T277 is subject to Phosphothreonine. The span at 286 to 296 shows a compositional bias: basic and acidic residues; that stretch reads KKAEPVKVLQK. Position 307 is a phosphoserine (S307). Pro residues predominate over residues 349 to 361; sequence PSPPPPPSPPLEP. Phosphoserine occurs at positions 407 and 409. T411 is subject to Phosphothreonine. Position 413 is a phosphoserine (S413). Residues 432–441 show a composition bias toward basic and acidic residues; the sequence is VKKEPREERK. A Glycyl lysine isopeptide (Lys-Gly) (interchain with G-Cter in SUMO); alternate cross-link involves residue K433. A Glycyl lysine isopeptide (Lys-Gly) (interchain with G-Cter in SUMO2); alternate cross-link involves residue K433. Residues 455-466 are compositionally biased toward polar residues; the sequence is RQVSITGFFQRK. Positions 456 to 463 match the PIP-box motif; the sequence is QVSITGFF. S458 carries the phosphoserine modification.

As to quaternary structure, component of both the DNA polymerase delta and DNA polymerase zeta complexes. The tetrameric DNA polymerase delta complex (Pol-delta4), which consists of POLD1/p125, POLD2/p50, POLD3/p66/p68 and POLD4/p12, with POLD1 bearing DNA polymerase and 3' to 5' proofreading exonuclease activities. Within this complex, directly interacts with POLD2. Following stress caused by DNA damaging agents or by replication stress, POLD4 is degraded and Pol-delta4 is converted into a trimeric form of the complex (Pol-delta3), which consists of POLD1, POLD2 and POLD3. Pol-delta3 is the major form occurring at S phase replication sites, as well as DNA damage sites. Directly interacts with PCNA, as do POLD1 and POLD4; this interaction stimulates Pol-delta polymerase activity. POLD3 phosphorylation at Ser-458 impairs PCNA binding. Component of the DNA polymerase zeta complex (POLZ), which consists of REV3L, MAD2L2, POLD2 and POLD3, with REV3L bearing DNA polymerase catalytic activity. The DNA polymerase delta complex interacts with POLDIP2; this interaction is probably mediated through direct binding to POLD2. In terms of processing, ubiquitinated, but not targeted to the proteasome. Sumoylated. Sumoylation with SUMO3 may be predominant. Post-translationally, phosphorylation at Ser-458 is catalyzed in vitro by PKA. It is thought to decrease the affinity for PCNA and Pol-delta4 processivity. Can also be phosphorylated in vitro by CDK1-cyclin-A complex, as well as CDK2-cyclin-A and CDK2-cyclin-E complexes. PCNA interferes with CDK-cyclin phosphorylation.

The protein localises to the cytoplasm. The protein resides in the nucleus. Accessory component of both the DNA polymerase delta complex and the DNA polymerase zeta complex. As a component of the trimeric and tetrameric DNA polymerase delta complexes (Pol-delta3 and Pol-delta4, respectively), plays a role in high fidelity genome replication, including in lagging strand synthesis, and repair. Required for optimal Pol-delta activity. Stabilizes the Pol-delta complex and plays a major role in Pol-delta stimulation by PCNA. Pol-delta3 and Pol-delta4 are characterized by the absence or the presence of POLD4. They exhibit differences in catalytic activity. Most notably, Pol-delta3 shows higher proofreading activity than Pol-delta4. Although both Pol-delta3 and Pol-delta4 process Okazaki fragments in vitro, Pol-delta3 may also be better suited to fulfill this task, exhibiting near-absence of strand displacement activity compared to Pol-delta4 and stalling on encounter with the 5'-blocking oligonucleotides. Pol-delta3 idling process may avoid the formation of a gap, while maintaining a nick that can be readily ligated. Along with DNA polymerase kappa, DNA polymerase delta carries out approximately half of nucleotide excision repair (NER) synthesis following UV irradiation. In this context, POLD3, along with PCNA and RFC1-replication factor C complex, is required to recruit POLD1, the catalytic subunit of the polymerase delta complex, to DNA damage sites. Under conditions of DNA replication stress, required for the repair of broken replication forks through break-induced replication (BIR). Involved in the translesion synthesis (TLS) of templates carrying O6-methylguanine or abasic sites performed by Pol-delta4, independently of DNA polymerase zeta (REV3L) or eta (POLH). Facilitates abasic site bypass by DNA polymerase delta by promoting extension from the nucleotide inserted opposite the lesion. Also involved in TLS, as a component of the tetrameric DNA polymerase zeta complex. Along with POLD2, dramatically increases the efficiency and processivity of DNA synthesis of the DNA polymerase zeta complex compared to the minimal zeta complex, consisting of only REV3L and REV7. This chain is DNA polymerase delta subunit 3 (POLD3), found in Homo sapiens (Human).